The sequence spans 221 residues: MAMVRLKYCGNRSADDVQVALASGADYLGFIFTESKRNVSPEEVKHWLALASLGDKQLVGVFVNASVDQIASVTEQLPLHVVQCHGHETPAELAVVKEATRLSVWKAIHHDDGALETMKQYAGVADGYVVDSRVAGAWGGTGVSFDWEAVPRYLEEAARQGVPCFIAGGITPDNIERLLAYRPDGIDISSGIETDGRKDPAKMKQIEEKTKQYLAVGKGAK.

Belongs to the TrpF family.

It carries out the reaction N-(5-phospho-beta-D-ribosyl)anthranilate = 1-(2-carboxyphenylamino)-1-deoxy-D-ribulose 5-phosphate. The protein operates within amino-acid biosynthesis; L-tryptophan biosynthesis; L-tryptophan from chorismate: step 3/5. This is N-(5'-phosphoribosyl)anthranilate isomerase from Geobacillus thermodenitrificans (strain NG80-2).